Reading from the N-terminus, the 332-residue chain is MAAVFLVTLYEYSPLFYIAVVFTCFIVTTGLVLGWFGWDVPVILRNSEETQFSTRAFKKQMRQVKNPFGLEITNSSAASLATGMALRTDCLEDSRLTCYWGCSVQKLYEALQKHAYCFRISTPQALEEALYSDYLHREQYFIKKHSKEEIYCQLPSDTEIEDFGPVPRSRYPLVALLTLADEDDREIYDIISMVSVIHIPDKTYKLPCRILYQYLILAQGQFYDLKQLFMSANNSPPPSNDESPEDRSVEQSLLEKVGLAGNDGDPVEESSRDCVVCQNGGVNWVLLPCRHACLCDSCVRYFKQCPMCRQFVQESFALCGQKEPDKDLLETS.

The RING-type zinc finger occupies 274–309; the sequence is CVVCQNGGVNWVLLPCRHACLCDSCVRYFKQCPMCR.

Its subcellular location is the nucleus. The protein localises to the endoplasmic reticulum. Able to inhibit growth in several cell lines. In Mus musculus (Mouse), this protein is Cell growth regulator with RING finger domain protein 1 (Cgrrf1).